Here is a 310-residue protein sequence, read N- to C-terminus: Homoserine kinase (310 aa).

91 to 101 (PIGSGLGSSAC) contacts ATP.

It belongs to the GHMP kinase family. Homoserine kinase subfamily.

It is found in the cytoplasm. The enzyme catalyses L-homoserine + ATP = O-phospho-L-homoserine + ADP + H(+). It functions in the pathway amino-acid biosynthesis; L-threonine biosynthesis; L-threonine from L-aspartate: step 4/5. Functionally, catalyzes the ATP-dependent phosphorylation of L-homoserine to L-homoserine phosphate. This Escherichia coli (strain SMS-3-5 / SECEC) protein is Homoserine kinase.